A 90-amino-acid chain; its full sequence is Probable Fe(2+)-trafficking protein (90 aa).

Belongs to the Fe(2+)-trafficking protein family.

Its function is as follows. Could be a mediator in iron transactions between iron acquisition and iron-requiring processes, such as synthesis and/or repair of Fe-S clusters in biosynthetic enzymes. In Vibrio parahaemolyticus serotype O3:K6 (strain RIMD 2210633), this protein is Probable Fe(2+)-trafficking protein.